The chain runs to 584 residues: MNNHIEALSYYLGAFVDELTRLDVCDVVISPGSRSTPIALLMEQHEGMNTYLHVDERSAGFFALGIAKAKKRPVALLCTSGTAAANYYPAVCEAFHSRVPLIVLTADRPHELRDVGAPQAMNQFNLYGTFVKQFTEMALPEASEAMYHYARMTTQRIVANACLAPQGPVHLNFPVREPLIPDFSLESLWDKGRSEYTGVVQQGNAVMPSEYVDSLVGRLSHMEKGLIICGDDSHAEIAMFATQLAEKTGYPILADPLSNIRSGHHDKTMVIDCYDTFLRNEKLKETWNGDVLIRFGGMPVSKSLTQFIKKQTKAVHIVVDESGQWRDPALVATEVVQASDIEFCKAAIEKMPVMKKNDWSLMWQHINEKTKETLREMETYETAFEGKVITDIVRVLPEDATLFASNSMPIRDTDSFFFTSDKNIHVMANRGVNGIDGIISTALGASVICDPLVLVIGDLSFYHDLNGLLAAKLHELNITIVVVNNDGGGIFSFLPQYEKKEHFESLFGTPIGLDYEHVVKMYGGSFSRVNGWEQFREEVRKGTTTEGLHVVEICTNRDENLTLHRTLWAKTMDVITTSLQGESK.

It belongs to the TPP enzyme family. MenD subfamily. Homodimer. Requires Mg(2+) as cofactor. Mn(2+) serves as cofactor. It depends on thiamine diphosphate as a cofactor.

The enzyme catalyses isochorismate + 2-oxoglutarate + H(+) = 5-enolpyruvoyl-6-hydroxy-2-succinyl-cyclohex-3-ene-1-carboxylate + CO2. It participates in quinol/quinone metabolism; 1,4-dihydroxy-2-naphthoate biosynthesis; 1,4-dihydroxy-2-naphthoate from chorismate: step 2/7. It functions in the pathway quinol/quinone metabolism; menaquinone biosynthesis. Its function is as follows. Catalyzes the thiamine diphosphate-dependent decarboxylation of 2-oxoglutarate and the subsequent addition of the resulting succinic semialdehyde-thiamine pyrophosphate anion to isochorismate to yield 2-succinyl-5-enolpyruvyl-6-hydroxy-3-cyclohexene-1-carboxylate (SEPHCHC). This is 2-succinyl-5-enolpyruvyl-6-hydroxy-3-cyclohexene-1-carboxylate synthase from Bacillus cereus (strain ATCC 14579 / DSM 31 / CCUG 7414 / JCM 2152 / NBRC 15305 / NCIMB 9373 / NCTC 2599 / NRRL B-3711).